The following is a 247-amino-acid chain: LHFPL tetraspan subfamily member 4 protein (247 aa).

Transmembrane regions (helical) follow at residues 22–42 (IGVL…VVFI), 97–117 (FFVL…SLFF), 127–147 (ICAW…MIFP), and 178–198 (ILAI…FVLG).

The protein belongs to the LHFP family. As to quaternary structure, interacts with GABA(A) receptor subunits. Identified in a complex of 720 kDa composed of LHFPL4, NLGN2, GABRA1, GABRB2, GABRG2 and GABRB3. Interacts with GABRB3. Interacts with GABRA2. Interacts with GABRG2. Interacts with GABRA1. Interacts with NLGN2; leading to mutual regulation of protein level and synaptic clustering.

Its subcellular location is the cell projection. The protein resides in the dendrite. It is found in the postsynaptic cell membrane. Its function is as follows. Plays a role in the regulation of inhibitory synapse formation and function by being involved in maintening gamma-aminobutyric acid receptors (GABAARs) clustering and their associated scaffold proteins at inhibitory synaptic sites. Acts in concert with NLGN2 to recruit or stabilize GABAARs. In Homo sapiens (Human), this protein is LHFPL tetraspan subfamily member 4 protein.